We begin with the raw amino-acid sequence, 217 residues long: Octanoyltransferase (217 aa).

Residues 32 to 207 (SESPDELWIV…TFSQLLGYQH (176 aa)) form the BPL/LPL catalytic domain. Residues 71-78 (RGGQVTYH), 138-140 (SLG), and 151-153 (GLA) each bind substrate. The active-site Acyl-thioester intermediate is C169.

It belongs to the LipB family.

It localises to the cytoplasm. The catalysed reaction is octanoyl-[ACP] + L-lysyl-[protein] = N(6)-octanoyl-L-lysyl-[protein] + holo-[ACP] + H(+). The protein operates within protein modification; protein lipoylation via endogenous pathway; protein N(6)-(lipoyl)lysine from octanoyl-[acyl-carrier-protein]: step 1/2. Its function is as follows. Catalyzes the transfer of endogenously produced octanoic acid from octanoyl-acyl-carrier-protein onto the lipoyl domains of lipoate-dependent enzymes. Lipoyl-ACP can also act as a substrate although octanoyl-ACP is likely to be the physiological substrate. In Shewanella sp. (strain W3-18-1), this protein is Octanoyltransferase.